Reading from the N-terminus, the 669-residue chain is uncharacterized protein (669 aa).

The next 6 helical transmembrane spans lie at 39–61, 124–146, 153–175, 190–212, 221–243, and 263–285; these read LCPLLVALAILFSLTAVSSGTSW, ISLWGISLGPTAGTLLVGVLISI, GIIYGIPSIVSTIFLLMFMYALG, GLAFIVIGLIVWSLNWLICFFGV, FAPGIISGSYTITAIIGVAQTAL, and IAAGYAISYVLSNIGIILLIRYL. 2 RCK C-terminal domains span residues 316-397 and 398-483; these read AGSL…KLIG and KESD…LGGR. The next 5 helical transmembrane spans lie at 484–506, 516–538, 558–580, 585–607, and 645–667; these read PILNSSITEVMYMAIAMGIGYIF, IPFALGTSAGCLLAGIFMSYWRS, IGLNLFVAVLAAAVGPKIIESFH, IWVAIIGILGALVPPLVAFVVGI, and VPYPLTYALTTVLALVGGYFAML.

This sequence belongs to the AAE transporter (TC 2.A.81) family.

The protein resides in the cell membrane. This is an uncharacterized protein from Desulfotalea psychrophila (strain LSv54 / DSM 12343).